We begin with the raw amino-acid sequence, 369 residues long: Tsukushi (369 aa).

A signal peptide spans 1-19 (MQFLAWFNMLLLLPCFSTT). One can recognise an LRRNT domain in the interval 20–60 (KTCFPGCHCEVESFGLFDSFSLTKVDCSGIGSHIVPVPIPL). LRR repeat units lie at residues 61 to 81 (DTSY…SMLT), 87 to 108 (TLVS…TFSR), 111 to 132 (YLES…CFSS), 134 to 155 (PLGD…VFAS), 161 to 181 (PLNV…HEKS), 184 to 205 (NIQN…QGIP), 206 to 226 (LRYL…DFKG), 229 to 248 (GLIH…SPYS), 254 to 276 (ALQV…VIFG), 279 to 300 (SIQE…VLKY), and 303 to 323 (SLKS…KEGQ). Asparagine 76 carries N-linked (GlcNAc...) asparagine glycosylation. Asparagine 189 carries N-linked (GlcNAc...) asparagine glycosylation. Asparagine 284 carries an N-linked (GlcNAc...) asparagine glycan.

In terms of assembly, forms a ternary complex with chordin/CHRD and BMP4. Interacts with FZD4 (via FZ domain); competes with WNT2B for binding to FZD4, inhibiting Wnt signaling and repressing peripheral eye development. Interacts with BMP4; shows stronger interaction with BMP4 than isoform 2. Interacts with DVR1/VG1; the interaction is inhibited by BMP4. Interacts with BMP7. As to quaternary structure, interacts with FZD4 (via FZ domain); competes with WNT2B for binding to FZD4, inhibiting Wnt signaling and repressing peripheral eye development. Interacts with BMP4; shows weaker interaction with BMP4 than isoform 1. Interacts with DVR1/VG1; the interaction is inhibited by BMP4. Interacts with BMP7. In terms of processing, N-glycosylated. In terms of tissue distribution, during embryonic development, expressed in the middle primitive streak and Hensen's node. Expressed in the peripheral region of the developing eye. Expressed in the presomitic mesoderm during somitogenesis in a NOTCH-dependent manner.

Its subcellular location is the secreted. Contributes to various developmental events through its interactions with multiple signaling pathways. Dorsalizing factor involved in the induction of Hensen's node by inhibiting bone morphogenetic proteins during gastrulation and by enhancing DVR1/VG1 activity. Wnt signaling inhibitor which competes with WNT2B for binding to Wnt receptor FZD4 and represses WNT2B-dependent development of the peripheral eye. In terms of biological role, shows strong bone morphogenetic protein antagonistic activity. Its function is as follows. Shows weak bone morphogenetic protein antagonistic activity. The chain is Tsukushi (TSKU) from Gallus gallus (Chicken).